The primary structure comprises 123 residues: Ribosome-binding factor A (123 aa).

Belongs to the RbfA family. As to quaternary structure, monomer. Binds 30S ribosomal subunits, but not 50S ribosomal subunits or 70S ribosomes.

Its subcellular location is the cytoplasm. One of several proteins that assist in the late maturation steps of the functional core of the 30S ribosomal subunit. Associates with free 30S ribosomal subunits (but not with 30S subunits that are part of 70S ribosomes or polysomes). Required for efficient processing of 16S rRNA. May interact with the 5'-terminal helix region of 16S rRNA. The sequence is that of Ribosome-binding factor A from Chlamydia trachomatis serovar L2 (strain ATCC VR-902B / DSM 19102 / 434/Bu).